Here is a 120-residue protein sequence, read N- to C-terminus: Autophagy-related protein 8C (120 aa).

Positions 1–20 are disordered; sequence MARSSFKLEHPLERRQAEAN. The Phosphatidylethanolamine amidated glycine moiety is linked to residue Gly117. Residues 118–120 constitute a propeptide, removed in mature form; the sequence is LFV.

This sequence belongs to the ATG8 family. In terms of assembly, interacts with ATG4. In terms of processing, the C-terminal 3 residues are removed by ATG4 to expose Gly-117 at the C-terminus. The C-terminal Gly is then amidated with phosphatidylethanolamine by an activating system similar to that for ubiquitin.

The protein localises to the cytoplasmic vesicle. It localises to the autophagosome membrane. It is found in the vacuole membrane. Its subcellular location is the cytoplasm. The protein resides in the cytoskeleton. In terms of biological role, ubiquitin-like modifier involved in autophagosomes formation. May mediate the delivery of the autophagosomes to the vacuole via the microtubule cytoskeleton. The chain is Autophagy-related protein 8C (ATG8C) from Oryza sativa subsp. indica (Rice).